Consider the following 160-residue polypeptide: Cytochrome b6-f complex subunit 4 (160 aa).

The next 3 helical transmembrane spans lie at 36–56 (LLYI…GLAV), 95–115 (LLGV…PFLE), and 131–151 (TVFL…ALPI).

This sequence belongs to the cytochrome b family. PetD subfamily. As to quaternary structure, the 4 large subunits of the cytochrome b6-f complex are cytochrome b6, subunit IV (17 kDa polypeptide, petD), cytochrome f and the Rieske protein, while the 4 small subunits are petG, petL, petM and petN. The complex functions as a dimer.

Its subcellular location is the plastid. The protein localises to the chloroplast thylakoid membrane. Its function is as follows. Component of the cytochrome b6-f complex, which mediates electron transfer between photosystem II (PSII) and photosystem I (PSI), cyclic electron flow around PSI, and state transitions. This chain is Cytochrome b6-f complex subunit 4, found in Physcomitrium patens (Spreading-leaved earth moss).